A 148-amino-acid chain; its full sequence is Large ribosomal subunit protein uL13 (148 aa).

This sequence belongs to the universal ribosomal protein uL13 family. Part of the 50S ribosomal subunit.

In terms of biological role, this protein is one of the early assembly proteins of the 50S ribosomal subunit, although it is not seen to bind rRNA by itself. It is important during the early stages of 50S assembly. The sequence is that of Large ribosomal subunit protein uL13 from Oenococcus oeni (strain ATCC BAA-331 / PSU-1).